Here is a 335-residue protein sequence, read N- to C-terminus: Acetyl-coenzyme A carboxylase carboxyl transferase subunit alpha (335 aa).

The CoA carboxyltransferase C-terminal domain occupies 40-294; the sequence is QLETLATRRR…KGAIEKHLNE (255 aa).

It belongs to the AccA family. Acetyl-CoA carboxylase is a heterohexamer composed of biotin carboxyl carrier protein (AccB), biotin carboxylase (AccC) and two subunits each of ACCase subunit alpha (AccA) and ACCase subunit beta (AccD).

The protein localises to the cytoplasm. The enzyme catalyses N(6)-carboxybiotinyl-L-lysyl-[protein] + acetyl-CoA = N(6)-biotinyl-L-lysyl-[protein] + malonyl-CoA. It participates in lipid metabolism; malonyl-CoA biosynthesis; malonyl-CoA from acetyl-CoA: step 1/1. Functionally, component of the acetyl coenzyme A carboxylase (ACC) complex. First, biotin carboxylase catalyzes the carboxylation of biotin on its carrier protein (BCCP) and then the CO(2) group is transferred by the carboxyltransferase to acetyl-CoA to form malonyl-CoA. This chain is Acetyl-coenzyme A carboxylase carboxyl transferase subunit alpha, found in Prochlorococcus marinus subsp. pastoris (strain CCMP1986 / NIES-2087 / MED4).